A 544-amino-acid chain; its full sequence is Membrane protein insertase YidC (544 aa).

The next 5 membrane-spanning stretches (helical) occupy residues L13 to L33, W343 to F363, L409 to V429, L461 to L481, and M506 to I526.

It belongs to the OXA1/ALB3/YidC family. Type 1 subfamily. In terms of assembly, interacts with the Sec translocase complex via SecD. Specifically interacts with transmembrane segments of nascent integral membrane proteins during membrane integration.

The protein resides in the cell inner membrane. In terms of biological role, required for the insertion and/or proper folding and/or complex formation of integral membrane proteins into the membrane. Involved in integration of membrane proteins that insert both dependently and independently of the Sec translocase complex, as well as at least some lipoproteins. Aids folding of multispanning membrane proteins. In Borreliella burgdorferi (strain ATCC 35210 / DSM 4680 / CIP 102532 / B31) (Borrelia burgdorferi), this protein is Membrane protein insertase YidC.